The chain runs to 663 residues: DNA ligase (663 aa).

NAD(+) contacts are provided by residues 33–37 (DYSYD), 82–83 (SI), and Glu-112. Lys-114 functions as the N6-AMP-lysine intermediate in the catalytic mechanism. NAD(+) contacts are provided by Arg-135, Glu-171, Lys-285, and Lys-309. Zn(2+) is bound by residues Cys-403, Cys-406, Cys-419, and Cys-424. Positions 581–663 (DKEAPLQGKV…LRILDAKSVS (83 aa)) constitute a BRCT domain.

This sequence belongs to the NAD-dependent DNA ligase family. LigA subfamily. It depends on Mg(2+) as a cofactor. The cofactor is Mn(2+).

The catalysed reaction is NAD(+) + (deoxyribonucleotide)n-3'-hydroxyl + 5'-phospho-(deoxyribonucleotide)m = (deoxyribonucleotide)n+m + AMP + beta-nicotinamide D-nucleotide.. In terms of biological role, DNA ligase that catalyzes the formation of phosphodiester linkages between 5'-phosphoryl and 3'-hydroxyl groups in double-stranded DNA using NAD as a coenzyme and as the energy source for the reaction. It is essential for DNA replication and repair of damaged DNA. This Chlamydia trachomatis serovar A (strain ATCC VR-571B / DSM 19440 / HAR-13) protein is DNA ligase.